The primary structure comprises 232 residues: uncharacterized protein (232 aa).

The protein localises to the cytoplasm. The protein resides in the nucleus. This is an uncharacterized protein from Saccharomyces cerevisiae (strain ATCC 204508 / S288c) (Baker's yeast).